The following is a 360-amino-acid chain: Protein-glutamate methylesterase/protein-glutamine glutaminase 3 (360 aa).

Residues 14-131 (RVLVIDDSAT…AEGVQAYAEE (118 aa)) form the Response regulatory domain. At aspartate 65 the chain carries 4-aspartylphosphate. The CheB-type methylesterase domain occupies 169–360 (AGKDGRVVAV…AGKLMELDGA (192 aa)). Active-site residues include serine 181, histidine 207, and aspartate 303.

This sequence belongs to the CheB family. Post-translationally, phosphorylated by CheA. Phosphorylation of the N-terminal regulatory domain activates the methylesterase activity.

Its subcellular location is the cytoplasm. The enzyme catalyses [protein]-L-glutamate 5-O-methyl ester + H2O = L-glutamyl-[protein] + methanol + H(+). It catalyses the reaction L-glutaminyl-[protein] + H2O = L-glutamyl-[protein] + NH4(+). Involved in chemotaxis. Part of a chemotaxis signal transduction system that modulates chemotaxis in response to various stimuli. Catalyzes the demethylation of specific methylglutamate residues introduced into the chemoreceptors (methyl-accepting chemotaxis proteins or MCP) by CheR. Also mediates the irreversible deamidation of specific glutamine residues to glutamic acid. This chain is Protein-glutamate methylesterase/protein-glutamine glutaminase 3, found in Burkholderia thailandensis (strain ATCC 700388 / DSM 13276 / CCUG 48851 / CIP 106301 / E264).